The sequence spans 735 residues: MAEPLLRKTFSRLRGREKLPRKKSDAKERGHPAQRPEPSPPEPEPQAPEGSQAGAEGPSSPEASRSPARGAYLQSLEPSSRRWVLGGAKPAEDTSLGPGVPGTGEPAGEIWYNPIPEEDPRPPAPEPPGPQPGSAESEGLAPQGAAPASPPTKASRTKSPGPARRLSIKMKKLPELRRRLSLRGPRAGRERERAAPAGSVISRYHLDSSVGGPGPAAGPGGTRSPRAGYLSDGDSPERPAGPPSPTSFRPYEVGPAARAPPAALWGRLSLHLYGLGGLRPAPGATPRDLCCLLQVDGEARARTGPLRGGPDFLRLDHTFHLELEAARLLRALVLAWDPGVRRHRPCAQGTVLLPTVFRGCQAQQLAVRLEPQGLLYAKLTLSEQQEAPATAEPRVFGLPLPLLVERERPPGQVPLIIQKCVGQIERRGLRVVGLYRLCGSAAVKKELRDAFERDSAAVCLSEDLYPDINVITGILKDYLRELPTPLITQPLYKVVLEAMARDPPNRVPPTTEGTRGLLSCLPDVERATLTLLLDHLRLVSSFHAYNRMTPQNLAVCFGPVLLPARQAPTRPRARSSGPGLASAVDFKHHIEVLHYLLQSWPDPRLPRQSPDVAPYLRPKRQPPLHLPLADPEVVTRPRGRGGPESPPSNRYAGDWSVCGRDFLPCGRDFLSGPDYDHVTGSDSEDEDEEVGEPRVTGDFEDDFDAPFNPHLNLKDFDALILDLERELSKQINVCL.

Residues 1-253 (MAEPLLRKTF…SPTSFRPYEV (253 aa)) are disordered. A compositionally biased stretch (basic and acidic residues) spans 14–31 (RGREKLPRKKSDAKERGH). A compositionally biased stretch (pro residues) spans 35 to 46 (RPEPSPPEPEPQ). The segment covering 47–71 (APEGSQAGAEGPSSPEASRSPARGA) has biased composition (low complexity). The span at 122–131 (PPAPEPPGPQ) shows a compositional bias: pro residues. Gly residues predominate over residues 211 to 221 (GGPGPAAGPGG). Serine 224, serine 231, serine 235, and serine 244 each carry phosphoserine. One can recognise a C2 domain in the interval 249-366 (RPYEVGPAAR…FRGCQAQQLA (118 aa)). A Rho-GAP domain is found at 398–604 (LPLPLLVERE…YLLQSWPDPR (207 aa)). Serine 575 carries the post-translational modification Phosphoserine. Disordered regions lie at residues 608 to 651 (QSPD…SNRY) and 674 to 696 (DYDHVTGSDSEDEDEEVGEPRVT). Residues serine 681 and serine 683 each carry the phosphoserine modification.

In terms of processing, palmitoylated. Probably palmitoylated by ZDHHC3 and ZDHHC7. In terms of tissue distribution, expressed in trophoblast cells of placental villi.

Functionally, GTPase activator for the Rho-type GTPases. As a GCM1 downstream effector, it is involved in placental development and positively regulates trophoblast cells migration. It regulates cytoskeletal remodeling by controlling the activity of Rho GTPases including RHOA, CDC42 and RAC1. This chain is Rho GTPase-activating protein SYDE1 (SYDE1), found in Homo sapiens (Human).